The primary structure comprises 409 residues: Argininosuccinate synthase (409 aa).

Residues 8–16 (AYSGGLDTS) and Ala34 each bind ATP. Tyr85 contributes to the L-citrulline binding site. Gly115 is an ATP binding site. L-aspartate contacts are provided by Thr117, Asn121, and Asp122. Asn121 provides a ligand contact to L-citrulline. Arg125, Ser178, Ser187, Glu268, and Tyr280 together coordinate L-citrulline.

It belongs to the argininosuccinate synthase family. Type 1 subfamily. Homotetramer.

It localises to the cytoplasm. It carries out the reaction L-citrulline + L-aspartate + ATP = 2-(N(omega)-L-arginino)succinate + AMP + diphosphate + H(+). Its pathway is amino-acid biosynthesis; L-arginine biosynthesis; L-arginine from L-ornithine and carbamoyl phosphate: step 2/3. In Thermotoga maritima (strain ATCC 43589 / DSM 3109 / JCM 10099 / NBRC 100826 / MSB8), this protein is Argininosuccinate synthase.